We begin with the raw amino-acid sequence, 251 residues long: Phosphate import ATP-binding protein PstB 2 (251 aa).

Residues 5–246 form the ABC transporter domain; it reads ISAKDVHLSY…PKKQITSDYL (242 aa). Residue 37–44 coordinates ATP; that stretch reads GPSGCGKS.

The protein belongs to the ABC transporter superfamily. Phosphate importer (TC 3.A.1.7) family. As to quaternary structure, the complex is composed of two ATP-binding proteins (PstB), two transmembrane proteins (PstC and PstA) and a solute-binding protein (PstS).

The protein resides in the cell membrane. It catalyses the reaction phosphate(out) + ATP + H2O = ADP + 2 phosphate(in) + H(+). Part of the ABC transporter complex PstSACB involved in phosphate import. Responsible for energy coupling to the transport system. The sequence is that of Phosphate import ATP-binding protein PstB 2 from Lactobacillus acidophilus (strain ATCC 700396 / NCK56 / N2 / NCFM).